Reading from the N-terminus, the 408-residue chain is Ribosomal RNA large subunit methyltransferase DR_0049 (408 aa).

The protein belongs to the methyltransferase superfamily.

It catalyses the reaction cytidine(2499) in 23S rRNA + S-adenosyl-L-methionine = 5-methylcytidine(2499) in 23S rRNA + S-adenosyl-L-homocysteine + H(+). Functionally, specifically methylates the cytosine at position 2499 (m5C2499) of 23S rRNA. The sequence is that of Ribosomal RNA large subunit methyltransferase DR_0049 from Deinococcus radiodurans (strain ATCC 13939 / DSM 20539 / JCM 16871 / CCUG 27074 / LMG 4051 / NBRC 15346 / NCIMB 9279 / VKM B-1422 / R1).